The primary structure comprises 88 residues: uncharacterized protein (88 aa).

A signal peptide spans 1–22 (MLKASILFITISLTLMLENSYG). Intrachain disulfides connect Cys-59-Cys-73, Cys-66-Cys-77, and Cys-72-Cys-82.

The protein localises to the secreted. This is an uncharacterized protein from Schistosoma japonicum (Blood fluke).